The sequence spans 1161 residues: BMP-2-inducible protein kinase (1161 aa).

The segment at 1-20 (MKKFSRMPKSEGGSGGGAAG) is disordered. At S14 the chain carries Phosphoserine. In terms of domain architecture, Protein kinase spans 51-316 (VTLEESLAEG…DIFQVSYFAF (266 aa)). Residues 57–65 (LAEGGFSTV) and K79 each bind ATP. D180 acts as the Proton acceptor in catalysis. 4 disordered regions span residues 358–439 (TDTI…RVLQ), 453–495 (LQHR…HHHL), 610–630 (TNQKNISNPPDMSGWNPFGED), and 655–832 (ERAS…TQDL). Over residues 361–394 (IGPTETSIAPRQRPKANSATTATPSVLTIQSSAT) the composition is skewed to polar residues. Composition is skewed to low complexity over residues 422-439 (LLGQGPPQQPPQQHRVLQ) and 460-485 (QQQQQQQQQQQQQQQQQQQQQQQQQQ). The segment covering 610–619 (TNQKNISNPP) has biased composition (polar residues). A Phosphoserine modification is found at S689. Composition is skewed to polar residues over residues 697 to 718 (SSINQENGTANPIKNGKTSPAS) and 726 to 735 (KTSVQGQVQK). S742 bears the Phosphoserine mark. Residues 755–779 (EEEEQDDEEVLQGEQGDFNDDDTEP) show a composition bias toward acidic residues. Residues 798 to 813 (EKHSSDSDYEQAKAKY) show a composition bias toward basic and acidic residues. 2 positions are modified to phosphoserine: S817 and S818. The residue at position 834 (T834) is a Phosphothreonine. S928 carries the phosphoserine modification. Residues 965–1035 (SQQQKVKQRS…RRDSQSSNEF (71 aa)) form a disordered region. Over residues 970 to 984 (VKQRSLQKLSSRQRR) the composition is skewed to basic residues. Residues 1000 to 1011 (TPTSTKKTLKPT) are compositionally biased toward low complexity. Phosphoserine occurs at positions 1029, 1031, 1032, 1039, 1041, 1076, 1107, and 1111. Positions 1137–1146 (TPHQSQQSQP) are enriched in polar residues. Residues 1137–1161 (TPHQSQQSQPVELDPFGAAPFPSKQ) form a disordered region.

The protein belongs to the protein kinase superfamily. Ser/Thr protein kinase family. Autophosphorylated.

The protein resides in the nucleus. It carries out the reaction L-seryl-[protein] + ATP = O-phospho-L-seryl-[protein] + ADP + H(+). The enzyme catalyses L-threonyl-[protein] + ATP = O-phospho-L-threonyl-[protein] + ADP + H(+). Its function is as follows. May be involved in osteoblast differentiation. This chain is BMP-2-inducible protein kinase (BMP2K), found in Homo sapiens (Human).